We begin with the raw amino-acid sequence, 499 residues long: Protein singed wings 2 (499 aa).

The signal sequence occupies residues 1 to 29; sequence MPSGVFQKRPKAAETISLFCMILIRLSRA. LRR repeat units lie at residues 154-175 and 178-199; these read ELHTINISWTNLSYISSRTFKR and PLKVLDLRWNQLIQLDGPLLLP. The LRRCT 1 domain maps to 210–265; it reads NPWNCTRNFKWLLLQPEKGRLVVDRDELICTDRKYKERQMLMVMHYKLELKRQCQS. LRR repeat units lie at residues 307–328, 332–353, and 357–378; these read NTTTLVINDNMISDINPLRDNP, HVVDMQLENNQISNVDNLEDTY, and NFRLLNLRGNNLRKLHVYALDN. One can recognise an LRRCT 2 domain in the interval 394 to 449; that stretch reads NPWHCTCKFGSRMRELLTKYKDIVRDAWNVSCTYRLDDDQLLAKVLTLSRQEMCNL.

Its function is as follows. Has a role in the ecdysone induced cascade; probably indirect control of 'late' ecdysone genes. The chain is Protein singed wings 2 from Drosophila melanogaster (Fruit fly).